A 579-amino-acid polypeptide reads, in one-letter code: Adenine deaminase (579 aa).

This sequence belongs to the metallo-dependent hydrolases superfamily. Adenine deaminase family. Requires Mn(2+) as cofactor.

It carries out the reaction adenine + H2O + H(+) = hypoxanthine + NH4(+). The chain is Adenine deaminase from Listeria monocytogenes serotype 4b (strain F2365).